Here is a 236-residue protein sequence, read N- to C-terminus: Small ribosomal subunit protein uS2c (236 aa).

This sequence belongs to the universal ribosomal protein uS2 family.

The protein localises to the plastid. It localises to the chloroplast. This is Small ribosomal subunit protein uS2c (rps2) from Carica papaya (Papaya).